A 359-amino-acid polypeptide reads, in one-letter code: Maleylacetate reductase 2 (359 aa).

This sequence belongs to the iron-containing alcohol dehydrogenase family. Homodimer.

The catalysed reaction is 3-oxoadipate + NAD(+) = maleylacetate + NADH + H(+). It carries out the reaction 3-oxoadipate + NADP(+) = maleylacetate + NADPH + H(+). Its pathway is aromatic compound metabolism; 3-chlorocatechol degradation. Inhibited by p-chloromercuribenzoate and by 3-oxoadipate, and, in a temperature-dependent manner, by manganese. Functionally, plays a major role in the degradation of chloroaromatic compounds by channeling maleylacetate and some of its substituted derivatives into the 3-oxoadipate pathway. This enzyme converts maleylacetate and 2-chloromaleylacetate with similar efficiencies. NADH is preferred to NADPH as the cosubstrate. The protein is Maleylacetate reductase 2 (tfdFII) of Cupriavidus pinatubonensis (strain JMP 134 / LMG 1197) (Cupriavidus necator (strain JMP 134)).